A 109-amino-acid chain; its full sequence is Spermidine export protein MdtI (109 aa).

Transmembrane regions (helical) follow at residues 6–26 (WIHA…NVFL), 36–56 (VYGI…SQAV), 64–84 (AYAL…WVLF), and 88–108 (LNNK…LIKL).

It belongs to the drug/metabolite transporter (DMT) superfamily. Small multidrug resistance (SMR) (TC 2.A.7.1) family. MdtI subfamily. Forms a complex with MdtJ.

The protein localises to the cell inner membrane. Functionally, catalyzes the excretion of spermidine. This chain is Spermidine export protein MdtI, found in Klebsiella pneumoniae (strain 342).